A 242-amino-acid chain; its full sequence is Uridylate kinase (242 aa).

Residue 16–19 (KVSG) participates in ATP binding. Gly58 lines the UMP pocket. The ATP site is built by Gly59 and Arg63. Residues Asp78 and 139–146 (TGNPFCTT) contribute to the UMP site. Positions 166, 167, 172, and 175 each coordinate ATP.

The protein belongs to the UMP kinase family. In terms of assembly, homohexamer.

The protein resides in the cytoplasm. It carries out the reaction UMP + ATP = UDP + ADP. The protein operates within pyrimidine metabolism; CTP biosynthesis via de novo pathway; UDP from UMP (UMPK route): step 1/1. Inhibited by UTP. Catalyzes the reversible phosphorylation of UMP to UDP. The protein is Uridylate kinase of Rickettsia massiliae (strain Mtu5).